The chain runs to 82 residues: Small ribosomal subunit protein bS16 (82 aa).

This sequence belongs to the bacterial ribosomal protein bS16 family.

The chain is Small ribosomal subunit protein bS16 from Acidobacterium capsulatum (strain ATCC 51196 / DSM 11244 / BCRC 80197 / JCM 7670 / NBRC 15755 / NCIMB 13165 / 161).